We begin with the raw amino-acid sequence, 295 residues long: Alpha-soluble NSF attachment protein (295 aa).

At methionine 1 the chain carries N-acetylmethionine. 3 positions are modified to phosphoserine: serine 26, serine 29, and serine 195.

It belongs to the SNAP family. As to quaternary structure, interacts with PRKCABP, and disrupts the interaction between GRIA2 and PRKCABP, leading to the internalization of GRIA2. Found in a complex with VAMP8. Component of a SNARE-like complex that contains at least ZW10, USE1L, RINT1, STX18 and NAPA/SNAP-alpha. Interacts with VTI1A. Interacts with STX12. Interacts with GNA12 (via N-terminus); the interaction promotes CDH5 localization to plasma membrane.

It is found in the cell membrane. In terms of biological role, required for vesicular transport between the endoplasmic reticulum and the Golgi apparatus. Together with GNA12 promotes CDH5 localization to plasma membrane. The polypeptide is Alpha-soluble NSF attachment protein (Napa) (Mus musculus (Mouse)).